Consider the following 318-residue polypeptide: Isoflavone reductase (318 aa).

Residues 11 to 17, R36, and K44 contribute to the NADP(+) site; that span reads GPTGAIG. K144 (proton acceptor) is an active-site residue. R148 serves as a coordination point for NADP(+).

Belongs to the NmrA-type oxidoreductase family. Isoflavone reductase subfamily.

It carries out the reaction (3R)-vestitone + NADP(+) = 2'-hydroxyformononetin + NADPH + 2 H(+). It participates in phytoalexin biosynthesis; pterocarpan phytoalexin biosynthesis. Functionally, reduces achiral isoflavones to chiral isoflavanones during the biosynthesis of chiral pterocarpan phytoalexins. The polypeptide is Isoflavone reductase (IFR) (Cicer arietinum (Chickpea)).